Reading from the N-terminus, the 423-residue chain is COP9 signalosome complex subunit 3 (423 aa).

The 169-residue stretch at 197–365 (NFERALYFYE…GMVCFHDNPE (169 aa)) folds into the PCI domain. A disordered region spans residues 402-423 (QFVQKSMGSQEDDSGTKPSSYS).

The protein belongs to the CSN3 family. Component of the CSN complex, probably composed of COPS1, COPS2, COPS3, COPS4, COPS5, COPS6, COPS7, COPS8 and COPS9.

It is found in the cytoplasm. The protein localises to the nucleus. Its function is as follows. Component of the COP9 signalosome complex (CSN), a complex involved in various cellular and developmental processes. The CSN complex is an essential regulator of the ubiquitin (Ubl) conjugation pathway by mediating the deneddylation of the cullin subunits of E3 ligase complexes, leading to modify the Ubl ligase activity. The protein is COP9 signalosome complex subunit 3 (COPS3) of Gallus gallus (Chicken).